The primary structure comprises 676 residues: Methionine--tRNA ligase (676 aa).

The 'HIGH' region motif lies at 11–21 (PYANGPCHLGH). Zn(2+)-binding residues include Cys143, Cys146, Cys156, and Cys159. Residues 326 to 330 (KMSTS) carry the 'KMSKS' region motif. Position 329 (Thr329) interacts with ATP. A tRNA-binding domain is found at 581–676 (EFGKVKLVVG…TEGNVGEYIK (96 aa)).

The protein belongs to the class-I aminoacyl-tRNA synthetase family. MetG type 1 subfamily. Homodimer. Zn(2+) is required as a cofactor.

It localises to the cytoplasm. It carries out the reaction tRNA(Met) + L-methionine + ATP = L-methionyl-tRNA(Met) + AMP + diphosphate. Its function is as follows. Is required not only for elongation of protein synthesis but also for the initiation of all mRNA translation through initiator tRNA(fMet) aminoacylation. The sequence is that of Methionine--tRNA ligase from Methanosphaera stadtmanae (strain ATCC 43021 / DSM 3091 / JCM 11832 / MCB-3).